Consider the following 690-residue polypeptide: DNA-directed RNA polymerase subunit beta' (690 aa).

Zn(2+) contacts are provided by C76, C78, C94, and C97. Mg(2+)-binding residues include D496, D498, and D500.

This sequence belongs to the RNA polymerase beta' chain family. RpoC1 subfamily. In plastids the minimal PEP RNA polymerase catalytic core is composed of four subunits: alpha, beta, beta', and beta''. When a (nuclear-encoded) sigma factor is associated with the core the holoenzyme is formed, which can initiate transcription. Mg(2+) is required as a cofactor. The cofactor is Zn(2+).

The protein localises to the plastid. Its subcellular location is the chloroplast. It catalyses the reaction RNA(n) + a ribonucleoside 5'-triphosphate = RNA(n+1) + diphosphate. In terms of biological role, DNA-dependent RNA polymerase catalyzes the transcription of DNA into RNA using the four ribonucleoside triphosphates as substrates. In Lemna minor (Common duckweed), this protein is DNA-directed RNA polymerase subunit beta'.